The sequence spans 177 residues: Sec-independent protein translocase protein TatB (177 aa).

A helical transmembrane segment spans residues 1–21 (MFDFAWSEIAVIGVVALVVIG). Basic and acidic residues predominate over residues 136 to 146 (REKTVSSETAR). Residues 136 to 177 (REKTVSSETARRAATAPAFIPPGEAFRSARRAPAFIPPADQG) are disordered.

This sequence belongs to the TatB family. The Tat system comprises two distinct complexes: a TatABC complex, containing multiple copies of TatA, TatB and TatC subunits, and a separate TatA complex, containing only TatA subunits. Substrates initially bind to the TatABC complex, which probably triggers association of the separate TatA complex to form the active translocon.

It is found in the cell inner membrane. Functionally, part of the twin-arginine translocation (Tat) system that transports large folded proteins containing a characteristic twin-arginine motif in their signal peptide across membranes. Together with TatC, TatB is part of a receptor directly interacting with Tat signal peptides. TatB may form an oligomeric binding site that transiently accommodates folded Tat precursor proteins before their translocation. In Granulibacter bethesdensis (strain ATCC BAA-1260 / CGDNIH1), this protein is Sec-independent protein translocase protein TatB.